A 145-amino-acid polypeptide reads, in one-letter code: MDESKKNERLKQLTDIQYNVTQKAGTERPFQNEFYDNAAKGIYVDIVSGKPLFSSTDQYDAGCGWPSFTKPIDEAEVKEHKDRTHGMIRTEVKSVDADSHLGHVFPDGPQDKGGLRYCINSAALRFIPVDKLDDEGYQAYKKIFE.

The MsrB domain maps to 6–129; sequence KNERLKQLTD…NSAALRFIPV (124 aa). Cysteine 118 functions as the Nucleophile in the catalytic mechanism.

The protein belongs to the MsrB Met sulfoxide reductase family.

It carries out the reaction L-methionyl-[protein] + [thioredoxin]-disulfide + H2O = L-methionyl-(R)-S-oxide-[protein] + [thioredoxin]-dithiol. In Listeria welshimeri serovar 6b (strain ATCC 35897 / DSM 20650 / CCUG 15529 / CIP 8149 / NCTC 11857 / SLCC 5334 / V8), this protein is Peptide methionine sulfoxide reductase MsrB.